The sequence spans 20 residues: Collagenolytic protease 28 kDa (20 aa).

Positions 1 to 20 (IVGGQEASPGSWPXQVGLFF) constitute a Peptidase S1 domain.

This sequence belongs to the peptidase S1 family.

The catalysed reaction is Hydrolysis of proteins, with broad specificity for peptide bonds. Native collagen is cleaved about 75% of the length of the molecule from the N-terminus. Low activity on small molecule substrates of both trypsin and chymotrypsin.. Its function is as follows. This enzyme is a serine protease capable of degrading the native triple helix of collagen. This chain is Collagenolytic protease 28 kDa, found in Paralithodes camtschaticus (Red king crab).